The sequence spans 201 residues: UPF0301 protein Bpet0561 (201 aa).

This sequence belongs to the UPF0301 (AlgH) family.

In Bordetella petrii (strain ATCC BAA-461 / DSM 12804 / CCUG 43448), this protein is UPF0301 protein Bpet0561.